A 216-amino-acid chain; its full sequence is MALSEAAQKVQAALLERGLETPMVPCGLSREERKDKIEQHMRAILGLMSLDLTDDSLADTPRRIAKMYVDEIFSGLDYENFPKITVIDNKMGVDEMVRVQDISLTSTCEHHLVTIDGTATVAYLPRKKIIGLSKINRIVRFFAQRPQVQERLTQQVLVALQALLETKDVAVKIDAVHYCVKSRGVMDATSSTTTTALGGIFKSNPATRAEFLHQPR.

Residues C108, H111, and C179 each contribute to the Zn(2+) site.

This sequence belongs to the GTP cyclohydrolase I family. Toroid-shaped homodecamer, composed of two pentamers of five dimers.

It catalyses the reaction GTP + H2O = 7,8-dihydroneopterin 3'-triphosphate + formate + H(+). The protein operates within cofactor biosynthesis; 7,8-dihydroneopterin triphosphate biosynthesis; 7,8-dihydroneopterin triphosphate from GTP: step 1/1. This is GTP cyclohydrolase 1 from Shewanella amazonensis (strain ATCC BAA-1098 / SB2B).